Reading from the N-terminus, the 78-residue chain is Small ribosomal subunit protein bS18 (78 aa).

The protein belongs to the bacterial ribosomal protein bS18 family. As to quaternary structure, part of the 30S ribosomal subunit. Forms a tight heterodimer with protein bS6.

Functionally, binds as a heterodimer with protein bS6 to the central domain of the 16S rRNA, where it helps stabilize the platform of the 30S subunit. This Ligilactobacillus salivarius (strain UCC118) (Lactobacillus salivarius) protein is Small ribosomal subunit protein bS18.